Reading from the N-terminus, the 159-residue chain is Transmembrane protein 89 (159 aa).

The first 24 residues, 1-24 (MLHVLASLPLLLLLVTSASTHAWS), serve as a signal peptide directing secretion. The Extracellular portion of the chain corresponds to 25–63 (RPLWYQVGLDLQPWGCQPKSVEGCRGGLSCPGYWLGPGA). Residues 64–86 (SRIYPVAAVMITTTMLMICRKIL) traverse the membrane as a helical segment. Residues 87–159 (QGRRRSQATK…QIKGTSTQSG (73 aa)) are Cytoplasmic-facing. The interval 91–110 (RSQATKGEHPQVTTEPCGPW) is disordered.

Its subcellular location is the membrane. In Homo sapiens (Human), this protein is Transmembrane protein 89 (TMEM89).